Reading from the N-terminus, the 363-residue chain is Aspartate-semialdehyde dehydrogenase (363 aa).

NADP(+)-binding residues include Thr15, Gly16, Ser17, Val18, Ser40, Ser43, and Leu87. The Acyl-thioester intermediate role is filled by Cys154. Gly186 serves as a coordination point for NADP(+). Residue His251 is the Proton acceptor of the active site. NADP(+) is bound at residue Asn341.

Belongs to the aspartate-semialdehyde dehydrogenase family. In terms of assembly, homotetramer; dimer of dimers.

It is found in the cytoplasm. Its subcellular location is the cytosol. The protein localises to the nucleus. It carries out the reaction L-aspartate 4-semialdehyde + phosphate + NADP(+) = 4-phospho-L-aspartate + NADPH + H(+). It participates in amino-acid biosynthesis; L-methionine biosynthesis via de novo pathway; L-homoserine from L-aspartate: step 2/3. It functions in the pathway amino-acid biosynthesis; L-threonine biosynthesis; L-threonine from L-aspartate: step 2/5. Its activity is regulated as follows. Inhibited by 4-amino-3-hydroxynaphthalene-1-sulfonic acid and the competitive inhibitor 1,4-benzoquinone and derivates such as 2-chloro-3-methoxy-1,4-naphthoquinone, 2,3-dichloro-1,4-naphthoquinone, 2-chloro-1,4-naphthoquinone, 2-bromo-1,4-naphthoquinone and 2,3-dichloro-5,8-dihydroxy-1,4-naphthoquinone. In terms of biological role, catalyzes the NADPH-dependent formation of L-aspartate 4-semialdehyde (L-ASA) by the reductive dephosphorylation of 4-phospho-L-aspartate. Mediates the second step in the biosynthesis of amino acids that derive from aspartate (the aspartate family of amino acids), including methioinine and threonine, the latter of which is a precursor to isoleucine. In Aspergillus fumigatus (strain ATCC MYA-4609 / CBS 101355 / FGSC A1100 / Af293) (Neosartorya fumigata), this protein is Aspartate-semialdehyde dehydrogenase.